A 106-amino-acid polypeptide reads, in one-letter code: Cell division protein FtsB (106 aa).

At 1-3 (MRL) the chain is on the cytoplasmic side. A helical transmembrane segment spans residues 4 to 21 (LTLIFVALIALLQYPLWL). The Periplasmic portion of the chain corresponds to 22 to 106 (GKGSWLRVWD…SPPAALTGAQ (85 aa)). Residues 31–73 (DLNQKIVAQKAVNAELKLRNDTLDAEVRDLKQGNAAIEERARS) are a coiled coil.

This sequence belongs to the FtsB family. Part of a complex composed of FtsB, FtsL and FtsQ.

The protein localises to the cell inner membrane. Essential cell division protein. May link together the upstream cell division proteins, which are predominantly cytoplasmic, with the downstream cell division proteins, which are predominantly periplasmic. In Methylobacillus flagellatus (strain ATCC 51484 / DSM 6875 / VKM B-1610 / KT), this protein is Cell division protein FtsB.